Reading from the N-terminus, the 146-residue chain is Heat-stable 19 kDa antigen (146 aa).

Residues 1 to 20 form the signal peptide; it reads MKFSLLSAIAAAVFVPFTSA.

Belongs to the cerato-platanin family. Post-translationally, glycosylated.

It localises to the secreted. In Coccidioides immitis (strain RS) (Valley fever fungus), this protein is Heat-stable 19 kDa antigen (CSA).